Here is a 357-residue protein sequence, read N- to C-terminus: Peptide chain release factor 1 (357 aa).

Residue Q234 is modified to N5-methylglutamine.

This sequence belongs to the prokaryotic/mitochondrial release factor family. In terms of processing, methylated by PrmC. Methylation increases the termination efficiency of RF1.

It is found in the cytoplasm. Its function is as follows. Peptide chain release factor 1 directs the termination of translation in response to the peptide chain termination codons UAG and UAA. This chain is Peptide chain release factor 1 (prfA), found in Lactococcus lactis subsp. lactis (strain IL1403) (Streptococcus lactis).